Here is a 100-residue protein sequence, read N- to C-terminus: Integration host factor subunit alpha (100 aa).

The segment at 53–72 (FQLRDKPQRPGRNPKTGEEV) is disordered.

Belongs to the bacterial histone-like protein family. As to quaternary structure, heterodimer of an alpha and a beta chain.

This protein is one of the two subunits of integration host factor, a specific DNA-binding protein that functions in genetic recombination as well as in transcriptional and translational control. The polypeptide is Integration host factor subunit alpha (Neisseria meningitidis serogroup C (strain 053442)).